Here is a 355-residue protein sequence, read N- to C-terminus: tRNA pseudouridine synthase D (355 aa).

Asp-84 acts as the Nucleophile in catalysis. A TRUD domain is found at 160 to 306 (GVPNYFGLQR…MAHERRILRL (147 aa)).

This sequence belongs to the pseudouridine synthase TruD family.

The catalysed reaction is uridine(13) in tRNA = pseudouridine(13) in tRNA. Its function is as follows. Responsible for synthesis of pseudouridine from uracil-13 in transfer RNAs. The chain is tRNA pseudouridine synthase D from Pseudomonas aeruginosa (strain ATCC 15692 / DSM 22644 / CIP 104116 / JCM 14847 / LMG 12228 / 1C / PRS 101 / PAO1).